The sequence spans 228 residues: Histone H1-III (228 aa).

The segment covering 1-18 (MSDPAPEVASAVPVASPA) has biased composition (low complexity). Disordered regions lie at residues 1-44 (MSDP…PPVS) and 98-228 (LQTK…AKKA). The H15 domain occupies 39–113 (THPPVSEMVV…GASGSFKLPA (75 aa)). Basic and acidic residues predominate over residues 115–133 (AKKEKVAKTPKKAAGEKKP). Composition is skewed to basic residues over residues 148-170 (SIAK…KSTK) and 178-209 (AAKK…KVAA). Positions 211-221 (KPAEKKPEAAK) are enriched in basic and acidic residues.

This sequence belongs to the histone H1/H5 family.

It is found in the nucleus. The protein localises to the chromosome. Histones H1 are necessary for the condensation of nucleosome chains into higher-order structures. The chain is Histone H1-III from Glyptotendipes barbipes (Midge).